We begin with the raw amino-acid sequence, 475 residues long: tRNA (guanine(37)-N(1))-methyltransferase (475 aa).

S-adenosyl-L-methionine contacts are provided by residues histidine 219, 258–259 (DL), and 286–287 (DG). Residues 306–328 (KITKQKPTSNDKKRNRKVESPTV) are disordered. Residue asparagine 349 coordinates S-adenosyl-L-methionine. A compositionally biased stretch (polar residues) spans 456 to 469 (NLVSQSDVSKSSDN). Residues 456–475 (NLVSQSDVSKSSDNILEKDT) form a disordered region.

Belongs to the class I-like SAM-binding methyltransferase superfamily. TRM5/TYW2 family. As to quaternary structure, monomer.

Its subcellular location is the mitochondrion matrix. The protein localises to the nucleus. It is found in the cytoplasm. It carries out the reaction guanosine(37) in tRNA + S-adenosyl-L-methionine = N(1)-methylguanosine(37) in tRNA + S-adenosyl-L-homocysteine + H(+). Functionally, specifically methylates the N1 position of guanosine-37 in various cytoplasmic and mitochondrial tRNAs. Methylation is not dependent on the nature of the nucleoside 5' of the target nucleoside. This is the first step in the biosynthesis of wybutosine (yW), a modified base adjacent to the anticodon of tRNAs and required for accurate decoding. This is tRNA (guanine(37)-N(1))-methyltransferase from Batrachochytrium dendrobatidis (strain JAM81 / FGSC 10211) (Frog chytrid fungus).